The following is an 83-amino-acid chain: Putative snRNP Sm-like protein (83 aa).

The 73-residue stretch at 9-81 folds into the Sm domain; that stretch reads KPMDVLKNAL…VIFVSPSKGD (73 aa).

It belongs to the snRNP Sm proteins family.

This is Putative snRNP Sm-like protein from Thermoplasma volcanium (strain ATCC 51530 / DSM 4299 / JCM 9571 / NBRC 15438 / GSS1).